The primary structure comprises 1486 residues: MIERGKFRSLTLINWNGFFARTFDLDELVTTLSGGNGAGKSTTMAAFVTALIPDLTLLHFRNTTEAGATSGSRDKGLHGKLKAGVCYSMLDTINSRHQRVVVGVRLQQVAGRDRKVDIKPFAIQGLPMSVQPTQLVTETLNERQARVLPLNELKDKLEAMEGVQFKQFNSITDYHSLMFDLGIIARRLRSASDRSKFYRLIEASLYGGISSAITRSLRDYLLPENSGVRKAFQDMEAALRENRMTLEAIRVTQSDRDLFKHLISEATNYVAADYMRHANERRVHLDKALEFRRELHTSRQQLAAEQYKHVDMARELAEHNGAEGDLEADYQAASDHLNLVQTALRQQEKIERYEADLDELQIRLEEQNEVVAEAIERQEENEARAEAAELEVDELKSQLADYQQALDVQQTRAIQYNQAIAALNRAKELCHLPDLTADSAAEWLETFQAKELEATEKMLSLEQKMSMAQTAHSQFEQAYQLVVAINGPLARNEAWDVARELLREGVDQRHLAEQVQPLRMRLSELEQRLREQQEAERLLADFCKRQGKNFDIDELEALHQELEARIASLSDSVSNAREERMALRQEQEQLQSRIQSLMQRAPVWLAAQNSLNQLSEQCGEEFTSSQDVTEYLQQLLEREREAIVERDEVGARKNAVDEEIERLSQPGGSEDQRLNALAERFGGVLLSEIYDDVSLEDAPYFSALYGPSRHAIVVPDLSQVTEHLDGLTDCPEDLYLIEGDPQSFDDSVFSVDELEKAVVVKIADRQWRYSRFPEVPLFGRAARESRIESLHAEREVLSERFATLSFDVQKTQRLHQAFSRFIGSHLAVVFESDPEAEIRQLNSRRVELERALSNHENDNQQQRIQFEQAKEGVTALNRILPRLNLLADDSLADRVDEIRERLDEAQEAARFVQQFGNQLAKLEPIVSVLQSDPEQFEQLKEDYAYSQQMQRDARQQAFALTEVVQRRAHFSYSDSAEMLSGNSDLNEKLRERLEQAEAERTRAREALRGHAAQLSQYNQVLASLKSSYDTKKELLNDLQRELQDIGVCADSGAEERARIRRDELHAQLSNNRSRRNQLEKALTFCEAEMDNLTRKLRKLERDYFEMREQVVTAKAGWCAVMRMVKDNGVERRLHRRELAYLSADDLRSMSDKALGALRLAVADNEHLRDVLRMSEDPKRPERKIQFFVAAYQHLRERIRQDIIRTDDPVEAIEQMEIELSRLTEELTSREQKLVISSRSVANIIRKTIQREQNRIRMLNQGLQNVSFGQVNSVRLNVNVRETHAMLLDVLSEQHEQHQDLFNSNRLTFSEALAKLYQRLNPQIDMGQRTPQTIGEELLDYRNYLEMEVEVNRGSDGWLRAESGALSTGEAIGTGMSILVMVVQSWEDESRRLRGKDISPCRLLFLDEAARLDARSIATLFELCERLQMQLIIAAPENISPEKGTTYKLVRKVFQNTEHVHVVGLRGFAPQLPETLPGTDEAPSQAS.

34–41 (GGNGAGKS) lines the ATP pocket. Coiled-coil stretches lie at residues 326-418 (LEAD…QYNQ), 444-480 (LETF…QAYQ), and 509-603 (RHLA…RAPV). The interval 666–783 (PGGSEDQRLN…EVPLFGRAAR (118 aa)) is flexible hinge. 3 coiled-coil regions span residues 835 to 923 (EAEI…AKLE), 977 to 1115 (EMLS…TAKA), and 1209 to 1266 (VEAI…QNVS).

It belongs to the SMC family. MukB subfamily. In terms of assembly, homodimerization via its hinge domain. Binds to DNA via its C-terminal region. Interacts, and probably forms a ternary complex, with MukE and MukF via its C-terminal region. The complex formation is stimulated by calcium or magnesium. Interacts with tubulin-related protein FtsZ.

The protein localises to the cytoplasm. The protein resides in the nucleoid. Its function is as follows. Plays a central role in chromosome condensation, segregation and cell cycle progression. Functions as a homodimer, which is essential for chromosome partition. Involved in negative DNA supercoiling in vivo, and by this means organize and compact chromosomes. May achieve or facilitate chromosome segregation by condensation DNA from both sides of a centrally located replisome during cell division. The protein is Chromosome partition protein MukB of Shigella boydii serotype 4 (strain Sb227).